The primary structure comprises 487 residues: Glycogen synthase (487 aa).

Residue lysine 20 participates in ADP-alpha-D-glucose binding.

It belongs to the glycosyltransferase 1 family. Bacterial/plant glycogen synthase subfamily.

The enzyme catalyses [(1-&gt;4)-alpha-D-glucosyl](n) + ADP-alpha-D-glucose = [(1-&gt;4)-alpha-D-glucosyl](n+1) + ADP + H(+). Its pathway is glycan biosynthesis; glycogen biosynthesis. Synthesizes alpha-1,4-glucan chains using ADP-glucose. In Aliivibrio fischeri (strain MJ11) (Vibrio fischeri), this protein is Glycogen synthase.